The chain runs to 406 residues: MARAFLFVLDSFGVGGAPDAPAYGDDGADTLGHIAEFCAAGAGDRDGLRAGPLMLPNLSALGLLQIASLASGSLPAGMALPERVFGLYGAANEISRGKDTPSGHWEIAGTPVMFDWGYFPQEGDAFPADLVADICKRADLPGILGNCHASGTDILARLGEEHCRTGQPICYTSSDSVFQIAAHEHVFGLERLLRLCEIVRELLTPYRIGRVIARPFIGNSASNFQRTGNRRDYSVPPPEPTLLDRLSEAGRTVHAIGKIGDIFAHQGTGRDIKANGNAALMEATLAVMDEAADGDLVFTNFVDFDMLYGHRRDVPGYAAALEAFDLWLPDVYRKLIPGDMVILTADHGCDPTWRGTDHTRERVPIMAFGPGIRARSIGIRDTYADIGETIAAHLGIAPGRHGMSFL.

Residues aspartate 10, aspartate 305, histidine 310, aspartate 346, histidine 347, and histidine 358 each contribute to the Mn(2+) site.

The protein belongs to the phosphopentomutase family. Requires Mn(2+) as cofactor.

The protein resides in the cytoplasm. The catalysed reaction is 2-deoxy-alpha-D-ribose 1-phosphate = 2-deoxy-D-ribose 5-phosphate. The enzyme catalyses alpha-D-ribose 1-phosphate = D-ribose 5-phosphate. It participates in carbohydrate degradation; 2-deoxy-D-ribose 1-phosphate degradation; D-glyceraldehyde 3-phosphate and acetaldehyde from 2-deoxy-alpha-D-ribose 1-phosphate: step 1/2. Functionally, isomerase that catalyzes the conversion of deoxy-ribose 1-phosphate (dRib-1-P) and ribose 1-phosphate (Rib-1-P) to deoxy-ribose 5-phosphate (dRib-5-P) and ribose 5-phosphate (Rib-5-P), respectively. The sequence is that of Phosphopentomutase from Allorhizobium ampelinum (strain ATCC BAA-846 / DSM 112012 / S4) (Agrobacterium vitis (strain S4)).